The chain runs to 336 residues: uncharacterized protein (336 aa).

An N-terminal signal peptide occupies residues 1 to 23 (MKTRHLVYLAFALLGLGLAGLLE). 3 consecutive transmembrane segments (helical) span residues 34 to 54 (LLSL…LLLG), 75 to 95 (VVVA…LLTT), and 106 to 126 (VHSL…ALGY). The PINc domain occupies 144 to 255 (VLDTSVLVDG…MARIYGVKAL (112 aa)). Asp-222 contributes to the Mg(2+) binding site. The region spanning 267–328 (QLQVGDTLKL…IQTQVGRLFF (62 aa)) is the TRAM domain.

Belongs to the PINc/VapC protein family. The cofactor is Mg(2+).

The protein resides in the membrane. Functionally, part of a toxin-antitoxin (TA) system. An RNase. This is an uncharacterized protein from Thermus thermophilus (strain ATCC 27634 / DSM 579 / HB8).